The following is a 144-amino-acid chain: Probable 4-amino-4-deoxy-L-arabinose-phosphoundecaprenol flippase subunit ArnF (144 aa).

The Cytoplasmic portion of the chain corresponds to methionine 1–alanine 6. A helical membrane pass occupies residues threonine 7–methionine 24. The Periplasmic segment spans residues arginine 25–alanine 56. A helical membrane pass occupies residues serine 57–leucine 77. Residues serine 78–alanine 80 lie on the Cytoplasmic side of the membrane. A helical membrane pass occupies residues tyrosine 81–phenylalanine 101. The Periplasmic segment spans residues histidine 102–threonine 104. A helical membrane pass occupies residues phenylalanine 105–leucine 125. Topologically, residues arginine 126–arginine 144 are cytoplasmic.

The protein belongs to the ArnF family. As to quaternary structure, heterodimer of ArnE and ArnF.

It is found in the cell inner membrane. It participates in bacterial outer membrane biogenesis; lipopolysaccharide biosynthesis. Translocates 4-amino-4-deoxy-L-arabinose-phosphoundecaprenol (alpha-L-Ara4N-phosphoundecaprenol) from the cytoplasmic to the periplasmic side of the inner membrane. In Pseudomonas syringae pv. syringae (strain B728a), this protein is Probable 4-amino-4-deoxy-L-arabinose-phosphoundecaprenol flippase subunit ArnF.